A 73-amino-acid polypeptide reads, in one-letter code: Large ribosomal subunit protein bL31 (73 aa).

This sequence belongs to the bacterial ribosomal protein bL31 family. Type A subfamily. In terms of assembly, part of the 50S ribosomal subunit.

In terms of biological role, binds the 23S rRNA. This is Large ribosomal subunit protein bL31 from Rhodospirillum centenum (strain ATCC 51521 / SW).